The chain runs to 1260 residues: MGQHQRTSSTHLPILYNHLLNCIFNNPHYNKSPFKNVVEELRTKHNQYTIIVPSAFVLNEFYDPATEGSSNRVLLKELCYNNEEFIKSHIIQTGSPVSSTITPISKEQLVIYKTMDNKQVLLKNRMIYTGKGFRRSLKLKILAVSYFRSFCDYFPKGSQFMLVHIESTLFGGQPYIKSSLPLAPILNVNDSSTASKSNSLTLESINNKIKNESVTFEKLLRNFPLLARAVGDKFNRLFHHNNHQFYGLRSNTRKKLEHIKIEFHKILDEAFKIILDSVKEERPNGEATYNLINHIISIHPNLNLDKLVHEYVELNLYDVLWSQLIYQYNYPNDDKADYDPSATKVMTSAKYEQLSCLSLNQLDVPLNKPWQLNELHHRIYQAVQELKKLSTSSTTTSTLAAKMQIIYNTINILTNPSQHAPMAPDLVIDADTLMALLIMTIVHAKVDNFEAHLFYIESFSASDVVCDGHFSYIMSTLDAVICHLSDNDKGLNTLIQSSQQNLELWSAIFELDLVSITKIVESFKNAALLPEQHCLKSRNISGEGALTFALKANNYDVYKLLLDGNPNWFTIDDILYEKNVVTNQNLLMCALLEETKEQIVLDLLETITENATVKEQQAYYNMQDLSGRSIGHYLFHNMSLISKIGHLIDWELRDRNTHTPLFSLCRCYDHPEYIELVQAGFEAVYLQLDKMRNNHNQNICSNGTKIETDACKDARDGIHINNDNSSRGIDFEKHIDKNGNTLLHVILKGIPETRILSRELNLIDVNISNYRHLTPLMLYVKYGRLENLESILADNRLDFLAEDPSTHYNIFDYLSFLAGRYAKENVEKIEKKLIEFYFSHYFPFEAHYKLVALNGKYDPSTRDWYIYYRAEDQKALRPKSLNSLKHILYLEKLQRPFTTFIDSDIFWRNYATNISTTPMFHKLRVNSLIHRLNILFQSVACQNIGDSRANDLFNRFLTNDEDELVLELKKKITDLLELKKLKLGEVKLKVGQVQEIEYFLDYCLDEMRRAIQIFSKLSKVAIIGEQKQIDVQNVENSLLYRFDVERFFQPFKTLTENETLVRVSGSLGNFGDYLVWIELAGKELLKNIFKISADIQTWKDLYHAIYTINRDLRSMEYPTGSLPTASSNAKETDPKALLREGGNTLSRTPTNSSDYTACNFDVPNTVVDDNEGIFNLLASSKRSKYKKLVVARADLVKQIMKLNVDIKWLHEIIATELSQFIKFRGRFLEFSTKLFVNEEMRSLRKRKLELEKFLYKVKNS.

One can recognise a VPS9 domain in the interval 336-493; that stretch reads ADYDPSATKV…LSDNDKGLNT (158 aa).

This sequence belongs to the UPF0507 family.

This chain is UPF0507 protein LELG_01076, found in Lodderomyces elongisporus (strain ATCC 11503 / CBS 2605 / JCM 1781 / NBRC 1676 / NRRL YB-4239) (Yeast).